Consider the following 157-residue polypeptide: SsrA-binding protein (157 aa).

Residues 136–151 (KRETEKKRDWSREKGR) show a composition bias toward basic and acidic residues. Residues 136–157 (KRETEKKRDWSREKGRLLRARG) are disordered.

It belongs to the SmpB family.

It localises to the cytoplasm. Required for rescue of stalled ribosomes mediated by trans-translation. Binds to transfer-messenger RNA (tmRNA), required for stable association of tmRNA with ribosomes. tmRNA and SmpB together mimic tRNA shape, replacing the anticodon stem-loop with SmpB. tmRNA is encoded by the ssrA gene; the 2 termini fold to resemble tRNA(Ala) and it encodes a 'tag peptide', a short internal open reading frame. During trans-translation Ala-aminoacylated tmRNA acts like a tRNA, entering the A-site of stalled ribosomes, displacing the stalled mRNA. The ribosome then switches to translate the ORF on the tmRNA; the nascent peptide is terminated with the 'tag peptide' encoded by the tmRNA and targeted for degradation. The ribosome is freed to recommence translation, which seems to be the essential function of trans-translation. In Rhodopseudomonas palustris (strain HaA2), this protein is SsrA-binding protein.